A 514-amino-acid polypeptide reads, in one-letter code: Type-2 serine--tRNA ligase (514 aa).

L-serine is bound at residue Ala-313. Cys-315 is a Zn(2+) binding site. Arg-344 lines the L-serine pocket. Residues 344-346 (RWE) and 355-356 (RV) contribute to the ATP site. 361 to 363 (RGE) contacts L-serine. Positions 363 and 470 each coordinate Zn(2+). Arg-477 is an ATP binding site.

This sequence belongs to the class-II aminoacyl-tRNA synthetase family. Type-2 seryl-tRNA synthetase subfamily. As to quaternary structure, homodimer. The cofactor is Zn(2+).

It is found in the cytoplasm. It catalyses the reaction tRNA(Ser) + L-serine + ATP = L-seryl-tRNA(Ser) + AMP + diphosphate + H(+). It carries out the reaction tRNA(Sec) + L-serine + ATP = L-seryl-tRNA(Sec) + AMP + diphosphate + H(+). It functions in the pathway aminoacyl-tRNA biosynthesis; selenocysteinyl-tRNA(Sec) biosynthesis; L-seryl-tRNA(Sec) from L-serine and tRNA(Sec): step 1/1. Catalyzes the attachment of serine to tRNA(Ser). Is also able to aminoacylate tRNA(Sec) with serine, to form the misacylated tRNA L-seryl-tRNA(Sec), which will be further converted into selenocysteinyl-tRNA(Sec). This is Type-2 serine--tRNA ligase from Methanococcus maripaludis (strain C7 / ATCC BAA-1331).